The primary structure comprises 223 residues: DNA mismatch repair protein MutH (223 aa).

This sequence belongs to the MutH family.

The protein localises to the cytoplasm. Functionally, sequence-specific endonuclease that cleaves unmethylated GATC sequences. It is involved in DNA mismatch repair. The protein is DNA mismatch repair protein MutH of Shewanella sp. (strain MR-4).